A 567-amino-acid chain; its full sequence is Hexose transporter HXT11 (567 aa).

Positions 1-22 are enriched in polar residues; that stretch reads MSGVNNTSANELSTTMSNSNSA. The disordered stretch occupies residues 1–45; that stretch reads MSGVNNTSANELSTTMSNSNSAVGAPSVKTEHGDSKNSLNLDANE. Topologically, residues 1–56 are cytoplasmic; that stretch reads MSGVNNTSANELSTTMSNSNSAVGAPSVKTEHGDSKNSLNLDANEPPIDLPQKPLS. The helical transmembrane segment at 57-77 threads the bilayer; the sequence is AYTTVAILCLMIAFGGFIFGW. The Extracellular segment spans residues 78–112; that stretch reads DTGTISGFVNLSDFIRRFGQKNDKGTYYLSKVRMG. The N-linked (GlcNAc...) asparagine glycan is linked to N87. Residues 113–133 traverse the membrane as a helical segment; sequence LIVSIFNIGCAIGGIVLSKVG. Topologically, residues 134–139 are cytoplasmic; that stretch reads DIYGRR. The chain crosses the membrane as a helical span at residues 140-160; that stretch reads IGLITVTAIYVVGILIQITSI. Residues 161–170 lie on the Extracellular side of the membrane; sequence NKWYQYFIGR. Residues 171–191 traverse the membrane as a helical segment; it reads IISGLGVGGIAVLSPMLISEV. The Cytoplasmic portion of the chain corresponds to 192-197; the sequence is APKHIR. Residues 198–218 form a helical membrane-spanning segment; it reads GTLVQLYQLMGTMGIFLGYCT. The Extracellular portion of the chain corresponds to 219 to 232; sequence NYGTKNYHNATQWR. N227 carries an N-linked (GlcNAc...) asparagine glycan. Residues 233-253 traverse the membrane as a helical segment; sequence VGLGLCFAWATFMVSGMMFVP. Over 254 to 336 the chain is Cytoplasmic; the sequence is ESPRYLIEVG…IQSLQQLTGD (83 aa). A helical transmembrane segment spans residues 337–353; that stretch reads NYFFYYGTTIFKSVGLK. At 354 to 359 the chain is on the extracellular side; that stretch reads DSFQTS. A helical transmembrane segment spans residues 360–377; the sequence is IIIGVVNFFSSFIAVYTI. Residues 378 to 384 are Cytoplasmic-facing; it reads ERFGRRT. The chain crosses the membrane as a helical span at residues 385-405; it reads CLLWGAASMLCCFAVFASVGV. Residues 406 to 429 are Extracellular-facing; that stretch reads TKLWPQGSSHQDITSQGAGNCMIV. A helical transmembrane segment spans residues 430–450; sequence FTMFFIFSFATTWAGGCYVIV. Residues 451-467 are Cytoplasmic-facing; sequence SETFPLRVKSRGMAIAT. The chain crosses the membrane as a helical span at residues 468-488; the sequence is AANWMWGFLISFFTPFITGAI. A topological domain (extracellular) is located at residue N489. Residues 490 to 510 traverse the membrane as a helical segment; sequence FYYGYVFLGCLVFAYFYVFFF. Topologically, residues 511–567 are cytoplasmic; that stretch reads VPETKGLTLEEVNTMWLEGVPAWKSASWVPPERRTADYDADAIDHDNRPIYKRFFSS.

Belongs to the major facilitator superfamily. Sugar transporter (TC 2.A.1.1) family.

Its subcellular location is the membrane. Probable glucose transporter. The sequence is that of Hexose transporter HXT11 (HXT11) from Saccharomyces cerevisiae (strain ATCC 204508 / S288c) (Baker's yeast).